The chain runs to 352 residues: Protein Wnt-4a (352 aa).

Positions 1-22 (MSSEYLIRSLLMLFLALFSANA) are cleaved as a signal peptide. 11 disulfides stabilise this stretch: Cys-78/Cys-89, Cys-128/Cys-136, Cys-138/Cys-155, Cys-206/Cys-220, Cys-208/Cys-215, Cys-280/Cys-312, Cys-297/Cys-307, Cys-311/Cys-351, Cys-327/Cys-342, Cys-329/Cys-339, and Cys-334/Cys-335. Residue Asn-88 is glycosylated (N-linked (GlcNAc...) asparagine). Ser-212 is lipidated: O-palmitoleoyl serine; by PORCN. Residue Asn-298 is glycosylated (N-linked (GlcNAc...) asparagine).

The protein belongs to the Wnt family. Palmitoleoylation is required for efficient binding to frizzled receptors. Depalmitoleoylation leads to Wnt signaling pathway inhibition. As to expression, caudal forebrain and neural keel, the floor plate, the gill slit and the developing pronephros.

The protein localises to the secreted. Its subcellular location is the extracellular space. It localises to the extracellular matrix. In terms of biological role, ligand for members of the frizzled family of seven transmembrane receptors. Plays an important role in embryonic development. The chain is Protein Wnt-4a (wnt4a) from Danio rerio (Zebrafish).